Here is a 612-residue protein sequence, read N- to C-terminus: Elongation factor 4 (612 aa).

The tr-type G domain maps to 11–193; sequence KHIRNFAIVA…KVVKDIPAPS (183 aa). GTP contacts are provided by residues 23–28 and 140–143; these read DHGKST and NKID.

The protein belongs to the TRAFAC class translation factor GTPase superfamily. Classic translation factor GTPase family. LepA subfamily.

The protein resides in the cell membrane. The catalysed reaction is GTP + H2O = GDP + phosphate + H(+). Functionally, required for accurate and efficient protein synthesis under certain stress conditions. May act as a fidelity factor of the translation reaction, by catalyzing a one-codon backward translocation of tRNAs on improperly translocated ribosomes. Back-translocation proceeds from a post-translocation (POST) complex to a pre-translocation (PRE) complex, thus giving elongation factor G a second chance to translocate the tRNAs correctly. Binds to ribosomes in a GTP-dependent manner. The chain is Elongation factor 4 from Lactobacillus helveticus (strain DPC 4571).